We begin with the raw amino-acid sequence, 273 residues long: Formamidopyrimidine-DNA glycosylase (273 aa).

P2 functions as the Schiff-base intermediate with DNA in the catalytic mechanism. E3 acts as the Proton donor in catalysis. The active-site Proton donor; for beta-elimination activity is K58. DNA contacts are provided by H91 and R110. An FPG-type zinc finger spans residues 238 to 272 (QVYGKTGQPCPRCGCLIKKIKVGGRGTHYCPRCQC). R262 serves as the catalytic Proton donor; for delta-elimination activity.

This sequence belongs to the FPG family. Monomer. Requires Zn(2+) as cofactor.

The enzyme catalyses Hydrolysis of DNA containing ring-opened 7-methylguanine residues, releasing 2,6-diamino-4-hydroxy-5-(N-methyl)formamidopyrimidine.. It catalyses the reaction 2'-deoxyribonucleotide-(2'-deoxyribose 5'-phosphate)-2'-deoxyribonucleotide-DNA = a 3'-end 2'-deoxyribonucleotide-(2,3-dehydro-2,3-deoxyribose 5'-phosphate)-DNA + a 5'-end 5'-phospho-2'-deoxyribonucleoside-DNA + H(+). Its function is as follows. Involved in base excision repair of DNA damaged by oxidation or by mutagenic agents. Acts as a DNA glycosylase that recognizes and removes damaged bases. Has a preference for oxidized purines, such as 7,8-dihydro-8-oxoguanine (8-oxoG). Has AP (apurinic/apyrimidinic) lyase activity and introduces nicks in the DNA strand. Cleaves the DNA backbone by beta-delta elimination to generate a single-strand break at the site of the removed base with both 3'- and 5'-phosphates. This Streptococcus agalactiae serotype Ia (strain ATCC 27591 / A909 / CDC SS700) protein is Formamidopyrimidine-DNA glycosylase.